The following is a 197-amino-acid chain: uncharacterized protein (197 aa).

This is an uncharacterized protein from Methanocaldococcus jannaschii (strain ATCC 43067 / DSM 2661 / JAL-1 / JCM 10045 / NBRC 100440) (Methanococcus jannaschii).